Consider the following 530-residue polypeptide: Glucose-6-phosphate isomerase (530 aa).

The Proton donor role is filled by Glu322. Active-site residues include His351 and Lys455.

The protein belongs to the GPI family.

The protein resides in the cytoplasm. It carries out the reaction alpha-D-glucose 6-phosphate = beta-D-fructose 6-phosphate. It functions in the pathway carbohydrate biosynthesis; gluconeogenesis. The protein operates within carbohydrate degradation; glycolysis; D-glyceraldehyde 3-phosphate and glycerone phosphate from D-glucose: step 2/4. Its function is as follows. Catalyzes the reversible isomerization of glucose-6-phosphate to fructose-6-phosphate. This is Glucose-6-phosphate isomerase from Geotalea daltonii (strain DSM 22248 / JCM 15807 / FRC-32) (Geobacter daltonii).